Consider the following 940-residue polypeptide: SWI/SNF-related matrix-associated actin-dependent regulator of chromatin subfamily A-like protein 1 (940 aa).

Positions 1-155 (MSISPLKCPC…GQGHPQASLE (155 aa)) are disordered. N-acetylserine is present on Ser2. Mediates interaction with RPA2 stretches follow at residues 2–36 (SISPLKCPCLLQRSRGKIEANRQKALARRAEKLLA) and 11–36 (LLQRSRGKIEANRQKALARRAEKLLA). Basic and acidic residues predominate over residues 17–40 (GKIEANRQKALARRAEKLLAEQHQ). Residues 18-40 (KIEANRQKALARRAEKLLAEQHQ) adopt a coiled-coil conformation. 2 stretches are compositionally biased toward polar residues: residues 41–53 (KPAQSKQGPSQNL) and 68–95 (KQQNPSSSSHGDQRPQNPHSFSPNTSEQ). A phosphoserine mark is found at Ser125, Ser131, Ser153, and Ser200. 2 consecutive HARP domains span residues 229–299 (VVGS…QPLE) and 325–396 (SLAF…DPLP). The 156-residue stretch at 442 to 597 (NFAIAQRGRL…YTQILAVRPT (156 aa)) folds into the Helicase ATP-binding domain. 455 to 462 (DDMGLGKT) is a binding site for ATP. The DESH box signature appears at 546–549 (DESH). The Nuclear localization signal signature appears at 641–658 (RRLKGDVLSQLPAKQARW). Residues 662-682 (PQARSTPGPEPPWMPPPRMTT) are disordered. Residues 669-679 (GPEPPWMPPPR) are compositionally biased toward pro residues. The 157-residue stretch at 708–864 (SIIEYILDLL…ETNFSEMTEA (157 aa)) folds into the Helicase C-terminal domain. Positions 899–918 (ESFDPGSQDTGDKLDESTLT) are disordered.

The protein belongs to the SNF2/RAD54 helicase family. SMARCAL1 subfamily. In terms of assembly, interacts with RPA2; the interaction is direct and mediates the recruitment by the RPA complex of SMARCAL1 to sites of DNA damage. DNA damage-regulated phosphorylation by kinases that may include ATM, ATR and PRKDC. In terms of tissue distribution, expressed in mature oocytes, 2-4 cell stage embryos and 8-16 cell stage embryos. Expressed at lower levels in morulae and blastocysts.

The protein resides in the nucleus. The enzyme catalyses ATP + H2O = ADP + phosphate + H(+). ATP-dependent annealing helicase that binds selectively to fork DNA relative to ssDNA or dsDNA and catalyzes the rewinding of the stably unwound DNA. Rewinds single-stranded DNA bubbles that are stably bound by replication protein A (RPA). Acts throughout the genome to reanneal stably unwound DNA, performing the opposite reaction of many enzymes, such as helicases and polymerases, that unwind DNA. May play an important role in DNA damage response by acting at stalled replication forks. This chain is SWI/SNF-related matrix-associated actin-dependent regulator of chromatin subfamily A-like protein 1 (SMARCAL1), found in Bos taurus (Bovine).